The chain runs to 367 residues: Serine O-succinyltransferase (367 aa).

Positions 41-351 constitute an AB hydrolase-1 domain; the sequence is NAVLILTGLS…SPQGHDAFLV (311 aa). The tract at residues 48–51 is important for substrate specificity; it reads GLSP. The active-site Nucleophile is Ser146. Arg215 serves as a coordination point for substrate. Residues Asp313 and His346 contribute to the active site. Asp347 is a substrate binding site.

This sequence belongs to the AB hydrolase superfamily. MetX family. In terms of assembly, homodimer.

The protein resides in the cytoplasm. The catalysed reaction is succinyl-CoA + L-serine = O-succinyl-L-serine + CoA. The enzyme catalyses L-homoserine + succinyl-CoA = O-succinyl-L-homoserine + CoA. It participates in amino-acid biosynthesis; L-cysteine biosynthesis; L-cysteine from L-serine: step 1/2. Its function is as follows. Transfers a succinyl group from succinyl-CoA to L-serine, forming succinyl-L-serine. In vitro, also has homoserine succinyl transferase activity. The polypeptide is Serine O-succinyltransferase (Frateuria aurantia (strain ATCC 33424 / DSM 6220 / KCTC 2777 / LMG 1558 / NBRC 3245 / NCIMB 13370) (Acetobacter aurantius)).